A 586-amino-acid chain; its full sequence is Chaperonin 60 subunit alpha 1, chloroplastic (586 aa).

A chloroplast-targeting transit peptide spans 1–46 (MASANALSSASVLCSSRQSKLGGGNQQQGQRVSYNKRTIRRFSVRA). At Ser90 the chain carries Phosphoserine.

Belongs to the chaperonin (HSP60) family. Part of the Cpn60 complex composed of 7 alpha and 7 beta subunits. This complex shows ATPase activity. The Cpn60 complex interacts with the Cpn10 complex. As to expression, expressed in leaves, stems, siliques and flowers.

It is found in the plastid. Its subcellular location is the chloroplast. Its function is as follows. Binds RuBisCO small and large subunits and is implicated in the assembly of the enzyme oligomer. Involved in protein assisted folding. Required for proper chloroplast development. This is Chaperonin 60 subunit alpha 1, chloroplastic (CPN60A1) from Arabidopsis thaliana (Mouse-ear cress).